Consider the following 333-residue polypeptide: Holliday junction branch migration complex subunit RuvB (333 aa).

The interval 1–181 is large ATPase domain (RuvB-L); that stretch reads MARILDNDLL…FGINGHMEYY (181 aa). Residues L20, R21, G62, K65, T66, T67, 128-130, R171, Y181, and R218 contribute to the ATP site; that span reads EDY. T66 serves as a coordination point for Mg(2+). The interval 130–148 is presensor-1 beta-hairpin; that stretch reads YYIDIMIGAGETSRSVHLD. The tract at residues 182-252 is small ATPAse domain (RuvB-S); the sequence is ELPDLTEIVE…IADQALTMLD (71 aa). Residues 255 to 333 form a head domain (RuvB-H) region; it reads HEGLDYVDQK…HMGYDYTRDN (79 aa). Residues R291, R310, R312, and R315 each coordinate DNA.

This sequence belongs to the RuvB family. In terms of assembly, homohexamer. Forms an RuvA(8)-RuvB(12)-Holliday junction (HJ) complex. HJ DNA is sandwiched between 2 RuvA tetramers; dsDNA enters through RuvA and exits via RuvB. Only 4 subunits contact one DNA strand at any time. Two adjacent subunits are contacted by domain III of RuvA. An RuvB hexamer assembles on each DNA strand where it exits the tetramer. Each RuvB hexamer is contacted by two RuvA subunits (via domain III) on 2 adjacent RuvB subunits; this complex drives branch migration. In the full resolvosome a probable DNA-RuvA(4)-RuvB(12)-RuvC(2) complex forms which resolves the HJ.

Its subcellular location is the cytoplasm. It carries out the reaction ATP + H2O = ADP + phosphate + H(+). Its activity is regulated as follows. Binding of domain III of RuvA to a single subunit of the RuvB hexamer activates the ATPase 2 subunits away and nucleotide exchange in the adjacent subunit. Its function is as follows. The RuvA-RuvB-RuvC complex processes Holliday junction (HJ) DNA during genetic recombination and DNA repair, while the RuvA-RuvB complex plays an important role in the rescue of blocked DNA replication forks via replication fork reversal (RFR). Catalyzes branch migration on Holliday junction (HJ) DNA in complex with RuvA from S.typhimurim and ATP. RuvA specifically binds to HJ cruciform DNA, conferring on it an open structure. The RuvB hexamer acts as an ATP-dependent pump, pulling dsDNA into and through the RuvAB complex. Forms 2 homohexamers on either side of HJ DNA bound by 1 or 2 RuvA tetramers; 4 subunits per hexamer contact DNA at a time. Coordinated motions by a converter formed by DNA-disengaged RuvB subunits stimulates ATP hydrolysis and nucleotide exchange. Immobilization of the converter enables RuvB to convert the ATP-contained energy into a lever motion, pulling 2 nucleotides of DNA out of the RuvA tetramer per ATP hydrolyzed, thus driving DNA branch migration. The RuvB motors rotate together with the DNA substrate, which together with the progressing nucleotide cycle forms the mechanistic basis for DNA recombination by continuous branch migration. Branch migration allows RuvC to scan DNA until it finds its consensus sequence, where it cleaves and resolves cruciform DNA. The sequence is that of Holliday junction branch migration complex subunit RuvB from Streptococcus thermophilus (strain ATCC BAA-250 / LMG 18311).